Here is a 142-residue protein sequence, read N- to C-terminus: Large ribosomal subunit protein uL11 (142 aa).

Belongs to the universal ribosomal protein uL11 family. As to quaternary structure, part of the ribosomal stalk of the 50S ribosomal subunit. Interacts with L10 and the large rRNA to form the base of the stalk. L10 forms an elongated spine to which L12 dimers bind in a sequential fashion forming a multimeric L10(L12)X complex. Post-translationally, one or more lysine residues are methylated.

Forms part of the ribosomal stalk which helps the ribosome interact with GTP-bound translation factors. The polypeptide is Large ribosomal subunit protein uL11 (Aeromonas hydrophila subsp. hydrophila (strain ATCC 7966 / DSM 30187 / BCRC 13018 / CCUG 14551 / JCM 1027 / KCTC 2358 / NCIMB 9240 / NCTC 8049)).